The following is an 86-amino-acid chain: MAHKKGTGSTRNGRDSNSKRLGVKAYGGEKVTAGSILIRQRGTSFLPGNNVGIGKDDTLFALKEGTVSFESIKRNLKNRKRVNIVI.

A disordered region spans residues 1-24 (MAHKKGTGSTRNGRDSNSKRLGVK).

This sequence belongs to the bacterial ribosomal protein bL27 family.

This Prochlorococcus marinus (strain AS9601) protein is Large ribosomal subunit protein bL27.